We begin with the raw amino-acid sequence, 465 residues long: UDP-N-acetylmuramate--L-alanine ligase (465 aa).

Residue 112–118 coordinates ATP; that stretch reads GTHGKTT.

It belongs to the MurCDEF family.

It is found in the cytoplasm. The catalysed reaction is UDP-N-acetyl-alpha-D-muramate + L-alanine + ATP = UDP-N-acetyl-alpha-D-muramoyl-L-alanine + ADP + phosphate + H(+). It participates in cell wall biogenesis; peptidoglycan biosynthesis. Functionally, cell wall formation. This Burkholderia ambifaria (strain ATCC BAA-244 / DSM 16087 / CCUG 44356 / LMG 19182 / AMMD) (Burkholderia cepacia (strain AMMD)) protein is UDP-N-acetylmuramate--L-alanine ligase.